Here is a 281-residue protein sequence, read N- to C-terminus: MDNIKVLFLGDVYGKAGRKIISDHLPIIKKKYQLNLIIANAENTTNGKGLSWNHYQILKQAGIDYITMGNHTWFQKQDLELVLNQVDVIRPLNLMQDFNYFQLGKGSYLFSLNGLKIRITNLLGTSINLPFAITNPFVELKKLVLTKDCDLHIVDFHAETTSEKNAFCMVFDGYVTAILGTHTHVPSNDLRITPKGSVYITDVGMCGPGFGSVIGANPKQSIKLFCTGERQFFEVSNCGAQLNGVFFEVCSKTNQVVKIEQIRIVLDDEKYLANDYFNLVE.

Residues Asp11, Glu42, Asn43, and Asn70 each contribute to the Fe cation site. The active-site Proton donor is the His71. Fe cation is bound by residues His157, His182, and His184.

It belongs to the YmdB-like family. It depends on Fe(3+) as a cofactor.

The chain is Putative phosphatase/phosphodiesterase MG246 from Mycoplasma genitalium (strain ATCC 33530 / DSM 19775 / NCTC 10195 / G37) (Mycoplasmoides genitalium).